The following is a 473-amino-acid chain: Glutamate--tRNA ligase (473 aa).

A 'HIGH' region motif is present at residues 10–20 (PSPTGYLHLGN). The Zn(2+) site is built by Cys-98, Cys-100, Cys-125, and His-127. Residues 242 to 246 (KLSKR) carry the 'KMSKS' region motif. Position 245 (Lys-245) interacts with ATP.

Belongs to the class-I aminoacyl-tRNA synthetase family. Glutamate--tRNA ligase type 1 subfamily. As to quaternary structure, monomer. It depends on Zn(2+) as a cofactor.

It is found in the cytoplasm. It carries out the reaction tRNA(Glu) + L-glutamate + ATP = L-glutamyl-tRNA(Glu) + AMP + diphosphate. Functionally, catalyzes the attachment of glutamate to tRNA(Glu) in a two-step reaction: glutamate is first activated by ATP to form Glu-AMP and then transferred to the acceptor end of tRNA(Glu). The sequence is that of Glutamate--tRNA ligase from Aquifex aeolicus (strain VF5).